A 63-amino-acid chain; its full sequence is U-reduvitoxin-Pr9a (63 aa).

Positions 1–19 (MRFFSLFTFLVAFIAAALA) are cleaved as a signal peptide. The propeptide occupies 20 to 42 (APVEIGEDLFALRPTGAKRDIIL). A disulfide bond links C47 and C60.

Expressed by the venom gland.

It localises to the secreted. This Platymeris rhadamanthus (Red spot assassin bug) protein is U-reduvitoxin-Pr9a.